Here is a 493-residue protein sequence, read N- to C-terminus: 3-octaprenyl-4-hydroxybenzoate carboxy-lyase (493 aa).

Asn-172 provides a ligand contact to Mn(2+). Prenylated FMN is bound by residues Ile-175–Arg-177, Arg-189–Leu-191, and Arg-194–Gly-195. Glu-238 serves as a coordination point for Mn(2+). Asp-287 acts as the Proton donor in catalysis.

The protein belongs to the UbiD family. As to quaternary structure, homohexamer. Prenylated FMN serves as cofactor. It depends on Mn(2+) as a cofactor.

It localises to the cell membrane. The enzyme catalyses a 4-hydroxy-3-(all-trans-polyprenyl)benzoate + H(+) = a 2-(all-trans-polyprenyl)phenol + CO2. The protein operates within cofactor biosynthesis; ubiquinone biosynthesis. Its function is as follows. Catalyzes the decarboxylation of 3-octaprenyl-4-hydroxy benzoate to 2-octaprenylphenol, an intermediate step in ubiquinone biosynthesis. The polypeptide is 3-octaprenyl-4-hydroxybenzoate carboxy-lyase (Shewanella sp. (strain ANA-3)).